The sequence spans 215 residues: Adenylate kinase (215 aa).

10–15 (GAGKGT) lines the ATP pocket. The interval 30–59 (STGDMLRAAVKAGSPLGQQVKGVMDSGGLV) is NMP. AMP-binding positions include Thr31, Arg36, 57–59 (GLV), 85–88 (GFPR), and Gln92. The segment at 122-159 (GRRVHPASGRVYHTEHNPPKVAGKDDVTGEDLIQREDD) is LID. ATP contacts are provided by residues Arg123 and 132-133 (VY). Residues Arg156 and Arg167 each contribute to the AMP site. Gly201 contributes to the ATP binding site.

This sequence belongs to the adenylate kinase family. As to quaternary structure, monomer.

The protein localises to the cytoplasm. The catalysed reaction is AMP + ATP = 2 ADP. It functions in the pathway purine metabolism; AMP biosynthesis via salvage pathway; AMP from ADP: step 1/1. Its function is as follows. Catalyzes the reversible transfer of the terminal phosphate group between ATP and AMP. Plays an important role in cellular energy homeostasis and in adenine nucleotide metabolism. This chain is Adenylate kinase, found in Pseudomonas paraeruginosa (strain DSM 24068 / PA7) (Pseudomonas aeruginosa (strain PA7)).